A 122-amino-acid chain; its full sequence is Gene 20 protein (122 aa).

The chain is Gene 20 protein (20) from Mycobacterium phage D29 (Mycobacteriophage D29).